Consider the following 154-residue polypeptide: UPF0547 protein C16orf87 homolog (154 aa).

The disordered stretch occupies residues 43–119; it reads NAKHSEKSPP…KHEEEREKQE (77 aa). A compositionally biased stretch (basic and acidic residues) spans 68-84; the sequence is VRREKINSTVNKDLENR. Serine 91 bears the Phosphoserine mark. Positions 104–132 form a coiled coil; it reads KSSSAKKHEEEREKQEKEIDIYANLSDEK. Residues 109 to 119 show a composition bias toward basic and acidic residues; the sequence is KKHEEEREKQE.

It belongs to the UPF0547 family.

The chain is UPF0547 protein C16orf87 homolog from Mus musculus (Mouse).